The primary structure comprises 597 residues: Chaperonin 60 subunit beta 3, chloroplastic (597 aa).

Residues 1-20 (MASTFSATSSMGSSLAPPSN) are disordered. The N-terminal 29 residues, 1–29 (MASTFSATSSMGSSLAPPSNRLSSFVSIS), are a transit peptide targeting the chloroplast. Phosphoserine occurs at positions 97 and 474. Residues 387 to 489 (STEEVVKKRV…KETLANDEEK (103 aa)) adopt a coiled-coil conformation.

It belongs to the chaperonin (HSP60) family. Part of the Cpn60 complex composed of 7 alpha and 7 beta subunits. Can also form a complex composed of 14 beta subunits only. Both complexes show ATPase activity. The Cpn60 complex interacts with the Cpn10 complex.

It is found in the plastid. Its subcellular location is the chloroplast. Its function is as follows. Involved in protein assisted folding. This is Chaperonin 60 subunit beta 3, chloroplastic (CPN60B3) from Arabidopsis thaliana (Mouse-ear cress).